The chain runs to 227 residues: Uracil-DNA glycosylase (227 aa).

The active-site Proton acceptor is aspartate 64.

Belongs to the uracil-DNA glycosylase (UDG) superfamily. UNG family.

The protein localises to the cytoplasm. It carries out the reaction Hydrolyzes single-stranded DNA or mismatched double-stranded DNA and polynucleotides, releasing free uracil.. Its function is as follows. Excises uracil residues from the DNA which can arise as a result of misincorporation of dUMP residues by DNA polymerase or due to deamination of cytosine. In Serratia proteamaculans (strain 568), this protein is Uracil-DNA glycosylase.